Reading from the N-terminus, the 1382-residue chain is Eukaryotic translation initiation factor 3 subunit A (1382 aa).

An N6-acetyllysine modification is found at Lys68. A coiled-coil region spans residues 82 to 120 (NIKSLEDVVRAYLKMAEEKTEAAKEESQQMVLDIEDLDN). The region spanning 315–498 (MQRMSTRVLL…RTLSFGSDLN (184 aa)) is the PCI domain. Phosphoserine occurs at positions 492 and 584. The interval 664–835 (LDPDFIMAKQ…REERERAERA (172 aa)) is interaction with EIF3B. Disordered stretches follow at residues 810 to 844 (KEEE…LREY) and 866 to 1382 (EERE…TVRR). Basic and acidic residues-rich tracts occupy residues 866 to 1165 (EERE…DDSR), 1177 to 1328 (GWRE…DPPR), and 1336 to 1371 (SRDR…TKNE). Residues Ser881, Ser882, and Ser895 each carry the phosphoserine modification. The stretch at 925–934 (DEDRSHRRDE) is repeat 1. The segment at 925-1172 (DEDRSHRRDE…DSRPGPWRPL (248 aa)) is 25 X 10 AA approximate tandem repeats of [DE]-[DE]-[DE]-R-[SEVGFPILV]-[HPSN]-[RSW]-[RL]-[DRGTIHN]-[EPMANLGDT]. One copy of the 2; truncated repeat lies at 935–942 (ERPRRLGD). 20 consecutive repeat copies span residues 943-952 (DEDREPSLRP), 953-962 (DDDRVPRRGM), 963-972 (DDDRGPRRGP), 973-982 (EEDRFSRRGA), 983-992 (DDDRPSWRNT), 993-1002 (DDDRPPRRIA), 1003-1012 (DEDRGNWRHA), 1013-1022 (DDDRPPRRGL), 1023-1032 (DEDRGSWRTA), 1033-1042 (DEDRGPRRGM), 1043-1052 (DDDRGPRRGG), 1054-1063 (DDERSSWRNA), 1064-1073 (DDDRGPRRGL), 1074-1083 (DDDRGPRRGM), 1084-1093 (DDDRGPRRGM), 1094-1103 (DDDRGPRRGM), 1104-1113 (DDDRGPRRGL), 1114-1123 (DDDRGPWRNA), 1124-1133 (DDDRIPRRGA), and 1134-1143 (EDDRGPWRNM). A Phosphoserine modification is found at Ser949. Ser1028 is modified (phosphoserine). The stretch at 1144-1152 (DDDRLSRRA) is one 23; truncated repeat. Residues 1153 to 1162 (DDDRFPRRGD) form repeat 24. A 25; approximate repeat occupies 1163 to 1172 (DSRPGPWRPL). Ser1188, Ser1198, Ser1262, Ser1336, and Ser1364 each carry phosphoserine.

Interacts with EIF4G1. Component of the eukaryotic translation initiation factor 3 (eIF-3) complex, which is composed of 13 subunits: EIF3A, EIF3B, EIF3C, EIF3D, EIF3E, EIF3F, EIF3G, EIF3H, EIF3I, EIF3J, EIF3K, EIF3L and EIF3M. The eIF-3 complex appears to include 3 stable modules: module A is composed of EIF3A, EIF3B, EIF3G and EIF3I; module B is composed of EIF3F, EIF3H, and EIF3M; and module C is composed of EIF3C, EIF3D, EIF3E, EIF3L and EIF3K. EIF3C of module C binds EIF3B of module A and EIF3H of module B, thereby linking the three modules. EIF3J is a labile subunit that binds to the eIF-3 complex via EIF3B. The eIF-3 complex interacts with RPS6KB1 under conditions of nutrient depletion. Mitogenic stimulation leads to binding and activation of a complex composed of MTOR and RPTOR, leading to phosphorylation and release of RPS6KB1 and binding of EIF4B to eIF-3. Also interacts with KRT7 and PIWIL2. In terms of processing, phosphorylated. Phosphorylation is enhanced upon serum stimulation.

The protein localises to the cytoplasm. Functionally, RNA-binding component of the eukaryotic translation initiation factor 3 (eIF-3) complex, which is required for several steps in the initiation of protein synthesis. The eIF-3 complex associates with the 40S ribosome and facilitates the recruitment of eIF-1, eIF-1A, eIF-2:GTP:methionyl-tRNAi and eIF-5 to form the 43S pre-initiation complex (43S PIC). The eIF-3 complex stimulates mRNA recruitment to the 43S PIC and scanning of the mRNA for AUG recognition. The eIF-3 complex is also required for disassembly and recycling of post-termination ribosomal complexes and subsequently prevents premature joining of the 40S and 60S ribosomal subunits prior to initiation. The eIF-3 complex specifically targets and initiates translation of a subset of mRNAs involved in cell proliferation, including cell cycling, differentiation and apoptosis, and uses different modes of RNA stem-loop binding to exert either translational activation or repression. In terms of biological role, (Microbial infection) Essential for the initiation of translation on type-1 viral ribosomal entry sites (IRESs), like for HCV, PV, EV71 or BEV translation. Its function is as follows. (Microbial infection) In case of FCV infection, plays a role in the ribosomal termination-reinitiation event leading to the translation of VP2. This Homo sapiens (Human) protein is Eukaryotic translation initiation factor 3 subunit A.